Consider the following 25-residue polypeptide: Phospholipase A1 verutoxin-2a (25 aa).

The protein belongs to the AB hydrolase superfamily. Lipase family. Contains six disulfide bonds. As to expression, expressed by the venom gland.

Its subcellular location is the secreted. The catalysed reaction is a 1,2-diacyl-sn-glycero-3-phosphocholine + H2O = a 2-acyl-sn-glycero-3-phosphocholine + a fatty acid + H(+). It catalyses the reaction 1-(9Z-octadecenoyl)-2-hexadecanoyl-sn-glycero-3-phosphocholine + H2O = 2-hexadecanoyl-sn-glycero-3-phosphocholine + (9Z)-octadecenoate + H(+). The enzyme catalyses a 1-acyl-sn-glycero-3-phosphocholine + H2O = sn-glycerol 3-phosphocholine + a fatty acid + H(+). It functions in the pathway phospholipid metabolism. Its activity is regulated as follows. Activity is maximal in the presence of calcium. However, unlike phospholipases A2 whose catalytic activity is strictly calcium-dependent, this enzyme shows considerable catalytic activity on phosphatidylcholine emulsified in calcium free solution; the catalytic activity of VT-2a assayed in the absence of calcium ions is 18-20% of that assayed in solution containing calcium ions. Its function is as follows. Catalyzes the hydrolysis of glycerophospholipids such as phosphatidylcholine (1,2-diacyl-sn-glycero-3-phosphocholine) and has a moderate activity to hydrolyze lysoglycerophospholipids such as lysophosphatidylcholine (1-acyl-sn-glycero-3-phosphocholine), but is unable to hydrolyze sphingomyelin. In addition to acting as an allergen, it possesses a potent hemolytic activity on red blood cells of mice (98.8% of hemolysis at 3.0 ug/ml). The sequence is that of Phospholipase A1 verutoxin-2a from Vespa velutina (Asian yellow-legged hornet).